Here is a 495-residue protein sequence, read N- to C-terminus: MLDSNELIQQRIQKIEDLKNQGINPYPVRFFPDSKSKDIVEKFEKDPTGPETKFKLGGRLHSKRVMGKASFAHLKDSTGIIQLYATRDDLGEISYSIFKSLDLGDIIGLEGYLFKTQKGEVTLHVTSVELLAKCIRPLPVVKEKDGVIYDAFADVEQRYRMRYVDLVVNDHVRDTFITRSRIVSEIRNFLTNEGFLEVETPMMQPIAGGAAARPFVTHHNTLDMQLFLRIAPELYLKRLIVGGMDRVFELNRNFRNEGISTKHNPEFTMMEAYIAFADMNTMLDLTERLITHLAQKIHGALKIQYGKDLIDLSPPWRKITYTDIIKEYSGIDFSLITSLEEAKKKASELNVDVSKCNTIWKVADEVFSEKAEPNLIQPVFIIDYPKELSPLAKSNPDKPGYVERFEPYVAGREIGNAFTELNDPFDQKERFEDQVQQREAGDDEAFMMDEDYIRALEYGMPPTGGLGIGIDRLVMLLTDSHSIRDTILFPLMRPE.

Glutamate 406 and glutamate 413 together coordinate Mg(2+).

This sequence belongs to the class-II aminoacyl-tRNA synthetase family. Homodimer. Requires Mg(2+) as cofactor.

Its subcellular location is the cytoplasm. The catalysed reaction is tRNA(Lys) + L-lysine + ATP = L-lysyl-tRNA(Lys) + AMP + diphosphate. The protein is Lysine--tRNA ligase of Leptospira borgpetersenii serovar Hardjo-bovis (strain JB197).